The chain runs to 2524 residues: Highly reducing polyketide synthase Preu5 (2524 aa).

The region spanning 5-426 (DTPIAIIGLS…GSNSAIVIEK (422 aa)) is the Ketosynthase family 3 (KS3) domain. Catalysis depends on for beta-ketoacyl synthase activity residues cysteine 175, histidine 310, and histidine 350. The tract at residues 431–470 (DELGHETNGTNGVSVSNGVNGSNGFTNGSNGTNGHAENGN) is disordered. Low complexity predominate over residues 437–464 (TNGTNGVSVSNGVNGSNGFTNGSNGTNG). Residues 559–882 (VFTGQGAQYA…TYLPSLVRNV (324 aa)) form a malonyl-CoA:ACP transacylase (MAT) domain region. The active-site For malonyltransferase activity is serine 648. The tract at residues 950 to 1084 (HELLGRRVVS…GQIEPEFADM (135 aa)) is N-terminal hotdog fold. One can recognise a PKS/mFAS DH domain in the interval 950–1264 (HELLGRRVVS…FRNIGSADEN (315 aa)). The tract at residues 950–1266 (HELLGRRVVS…NIGSADENID (317 aa)) is dehydratase (DH) domain. Residue histidine 982 is the Proton acceptor; for dehydratase activity of the active site. Residues 1102-1264 (ADLLEHDIEG…FRNIGSADEN (163 aa)) form a C-terminal hotdog fold region. Aspartate 1171 serves as the catalytic Proton donor; for dehydratase activity. Residues 1418–1611 (SQAVGDLADN…IPGVWDSEVQ (194 aa)) form a methyltransferase (CMet) domain region. Positions 1825 to 2139 (GSPDSIYFRR…SGDHLGKIVV (315 aa)) are enoylreductase (ER) domain. The segment at 2164-2339 (GTYLVTGGTR…HTVSIALPIV (176 aa)) is ketoreductase (KR) domain. The Carrier domain maps to 2445-2522 (DPLEGLTEAL…ALATDILSQR (78 aa)). Position 2482 is an O-(pantetheine 4'-phosphoryl)serine (serine 2482).

Pantetheine 4'-phosphate is required as a cofactor.

Functionally, highly reducing polyketide synthase; part of a gene cluster that mediates the biosynthesis of a yet unidentified natural product. This is Highly reducing polyketide synthase Preu5 from Preussia isomera (Coprophilous fungus).